Here is a 311-residue protein sequence, read N- to C-terminus: Olfactory receptor 8G1 (311 aa).

Residues 1-25 are Extracellular-facing; the sequence is MSGENNSSVTEFILAGLSEQPELQL. Residues Asn-5 and Asn-6 are each glycosylated (N-linked (GlcNAc...) asparagine). Residues 26-46 form a helical membrane-spanning segment; sequence PLFLLFLGIYVVTVVGNLGMT. The Cytoplasmic portion of the chain corresponds to 47-54; it reads TLIWLSSH. Residues 55 to 75 form a helical membrane-spanning segment; that stretch reads LHTPMYYFLSSLSFIDFCHST. Over 76-99 the chain is Extracellular; it reads VITPKMLVNFVTEKNIISYPECMT. The cysteines at positions 97 and 189 are disulfide-linked. A helical membrane pass occupies residues 100–120; it reads QLYFFLVFAIAECHMLAAMAY. Topologically, residues 121–139 are cytoplasmic; the sequence is DRYMAICSPLLYSVIISNK. The helical transmembrane segment at 140–160 threads the bilayer; sequence ACFSLILGVYIIGLVCASVHT. Topologically, residues 161 to 197 are extracellular; the sequence is GCMFRVQFCKFDLINHYFCDLLPLLKLSCSSIYVNKL. Residues 198 to 217 form a helical membrane-spanning segment; it reads LILCVGAFNILVPSLTILCS. Residues 218-237 are Cytoplasmic-facing; that stretch reads YIFIIASILHIRSTEGRSKA. The chain crosses the membrane as a helical span at residues 238-258; sequence FSTCSSHMLAVVIFFGSAAFM. The Extracellular portion of the chain corresponds to 259 to 271; the sequence is YLQPSSISSMDQG. Residues 272-292 traverse the membrane as a helical segment; it reads KVSSVFYTIIVPMLNPLIYSL. At 293 to 311 the chain is on the cytoplasmic side; it reads RNKDVHVSLKKMLQRRTLL.

Belongs to the G-protein coupled receptor 1 family.

Its subcellular location is the cell membrane. Odorant receptor. This Homo sapiens (Human) protein is Olfactory receptor 8G1 (OR8G1).